Consider the following 338-residue polypeptide: MENLDALVSQALEAVRHTEDVNALEQIRVHYLGKKGELTQVMKTLGDLPAEERPKVGALINVAKEKVQDVLNARKTELEGAALAARLAAERIDVTLPGRGQLSGGLHPVTRTLERIEQCFSRIGYEVAEGPEVEDDYHNFEALNIPGHHPARAMHDTFYFNANMLLRTHTSPVQVRTMESQQPPIRIVCPGRVYRCDSDLTHSPMFHQVEGLLVDEGVSFADLKGTIEEFLRAFFEKQLEVRFRPSFFPFTEPSAEVDIQCVICSGNGCRVCKQTGWLEVMGCGMVHPNVLRMSNIDPEKFQGFAFGMGAERLAMLRYGVNDLRLFFDNDLRFLGQFR.

Mg(2+) is bound at residue E252.

Belongs to the class-II aminoacyl-tRNA synthetase family. Phe-tRNA synthetase alpha subunit type 1 subfamily. Tetramer of two alpha and two beta subunits. The cofactor is Mg(2+).

It is found in the cytoplasm. It carries out the reaction tRNA(Phe) + L-phenylalanine + ATP = L-phenylalanyl-tRNA(Phe) + AMP + diphosphate + H(+). The sequence is that of Phenylalanine--tRNA ligase alpha subunit from Pseudomonas aeruginosa (strain ATCC 15692 / DSM 22644 / CIP 104116 / JCM 14847 / LMG 12228 / 1C / PRS 101 / PAO1).